Here is a 192-residue protein sequence, read N- to C-terminus: Immunoglobulin superfamily member 23 (192 aa).

A disordered region spans residues 1 to 26 (MRAKPQSPLPRNPVPAWSPPTTTTDP). Residues 7-18 (SPLPRNPVPAWS) are compositionally biased toward pro residues. An Ig-like domain is found at 20 to 128 (PTTTTDPMLE…QLVSEPVTIS (109 aa)). N-linked (GlcNAc...) asparagine glycosylation is present at asparagine 64. The helical transmembrane segment at 158 to 178 (LLAAGILGAGALIAGMCFIII) threads the bilayer.

In terms of tissue distribution, expressed in bone and small intestine. Highly expressed in osteoclasts, and low expressed in osteoblasts and peripheral blood mononuclear cells (PBMCs).

The protein resides in the cell membrane. May be involved in osteoclast differentiation. In Homo sapiens (Human), this protein is Immunoglobulin superfamily member 23.